The chain runs to 144 residues: Large ribosomal subunit protein uL16 (144 aa).

Belongs to the universal ribosomal protein uL16 family. Part of the 50S ribosomal subunit.

Functionally, binds 23S rRNA and is also seen to make contacts with the A and possibly P site tRNAs. This chain is Large ribosomal subunit protein uL16, found in Listeria innocua serovar 6a (strain ATCC BAA-680 / CLIP 11262).